Here is a 101-residue protein sequence, read N- to C-terminus: Small ribosomal subunit protein uS14 (101 aa).

It belongs to the universal ribosomal protein uS14 family. As to quaternary structure, part of the 30S ribosomal subunit. Contacts proteins S3 and S10.

Binds 16S rRNA, required for the assembly of 30S particles and may also be responsible for determining the conformation of the 16S rRNA at the A site. This Zymomonas mobilis subsp. mobilis (strain ATCC 31821 / ZM4 / CP4) protein is Small ribosomal subunit protein uS14.